The primary structure comprises 92 residues: ADESALAQTKGCLACHNPEKKVVGPAYGWVAKKYAGQAGAEAKLVAKVMAGGQGVWAKQLGAEIPMPANNVTKEEATRLVKWVLSLKQIDYK.

Heme c is bound by residues Cys12, Cys15, His16, and Met66.

This sequence belongs to the cytochrome c family. Post-translationally, binds 1 heme c group covalently per subunit.

Cytochrome c2 is found mainly in purple, non-sulfur, photosynthetic bacteria where it functions as the electron donor to the oxidized bacteriochlorophyll in the photophosphorylation pathway. However, it may also have a role in the respiratory chain and is found in some non-photosynthetic bacteria. This chain is Cytochrome c2, found in Rhodocyclus tenuis (Rhodospirillum tenue).